The sequence spans 396 residues: Inositol hexakisphosphate kinase 3 (396 aa).

206 to 214 is a substrate binding site; sequence PCILDLKMG.

This sequence belongs to the inositol phosphokinase (IPK) family. Highly expressed in cerebellum, brain cortex, kidney, thymus and lung. Detected at lower levels in hippocampus, testis, heart and olfactory bulb.

It localises to the cytoplasm. The enzyme catalyses 1D-myo-inositol hexakisphosphate + ATP = 5-diphospho-1D-myo-inositol 1,2,3,4,6-pentakisphosphate + ADP. The catalysed reaction is 1-diphospho-1D-myo-inositol 2,3,4,5,6-pentakisphosphate + ATP + H(+) = 1,5-bis(diphospho)-1D-myo-inositol 2,3,4,6-tetrakisphosphate + ADP. In terms of biological role, converts inositol hexakisphosphate (InsP6) to diphosphoinositol pentakisphosphate (InsP7/PP-InsP5). Converts 1,3,4,5,6-pentakisphosphate (InsP5) to PP-InsP4. The sequence is that of Inositol hexakisphosphate kinase 3 (Ip6k3) from Mus musculus (Mouse).